A 393-amino-acid polypeptide reads, in one-letter code: Acetylornithine aminotransferase (393 aa).

Pyridoxal 5'-phosphate contacts are provided by residues 96–97 (GT) and Phe-129. Arg-132 provides a ligand contact to N(2)-acetyl-L-ornithine. 214–217 (DEVQ) is a binding site for pyridoxal 5'-phosphate. Lys-243 is subject to N6-(pyridoxal phosphate)lysine. Ser-271 provides a ligand contact to N(2)-acetyl-L-ornithine. Thr-272 serves as a coordination point for pyridoxal 5'-phosphate.

The protein belongs to the class-III pyridoxal-phosphate-dependent aminotransferase family. ArgD subfamily. As to quaternary structure, homodimer. Pyridoxal 5'-phosphate serves as cofactor.

It is found in the cytoplasm. It carries out the reaction N(2)-acetyl-L-ornithine + 2-oxoglutarate = N-acetyl-L-glutamate 5-semialdehyde + L-glutamate. Its pathway is amino-acid biosynthesis; L-arginine biosynthesis; N(2)-acetyl-L-ornithine from L-glutamate: step 4/4. This chain is Acetylornithine aminotransferase, found in Rhodobacter capsulatus (strain ATCC BAA-309 / NBRC 16581 / SB1003).